Consider the following 271-residue polypeptide: Phosphatidylglycerol--prolipoprotein diacylglyceryl transferase (271 aa).

A run of 7 helical transmembrane segments spans residues L21–A41, L60–Y80, V95–W115, F124–I144, Q177–G197, G203–V223, and F236–V256. R143 is an a 1,2-diacyl-sn-glycero-3-phospho-(1'-sn-glycerol) binding site.

The protein belongs to the Lgt family.

Its subcellular location is the cell inner membrane. The enzyme catalyses L-cysteinyl-[prolipoprotein] + a 1,2-diacyl-sn-glycero-3-phospho-(1'-sn-glycerol) = an S-1,2-diacyl-sn-glyceryl-L-cysteinyl-[prolipoprotein] + sn-glycerol 1-phosphate + H(+). It participates in protein modification; lipoprotein biosynthesis (diacylglyceryl transfer). Functionally, catalyzes the transfer of the diacylglyceryl group from phosphatidylglycerol to the sulfhydryl group of the N-terminal cysteine of a prolipoprotein, the first step in the formation of mature lipoproteins. The protein is Phosphatidylglycerol--prolipoprotein diacylglyceryl transferase of Vibrio cholerae serotype O1 (strain ATCC 39541 / Classical Ogawa 395 / O395).